The primary structure comprises 85 residues: Large ribosomal subunit protein bL27 (85 aa).

The disordered stretch occupies residues M1–G22.

Belongs to the bacterial ribosomal protein bL27 family.

The polypeptide is Large ribosomal subunit protein bL27 (Tolumonas auensis (strain DSM 9187 / NBRC 110442 / TA 4)).